A 249-amino-acid polypeptide reads, in one-letter code: 3-deoxy-manno-octulosonate cytidylyltransferase (249 aa).

The protein belongs to the KdsB family.

Its subcellular location is the cytoplasm. It catalyses the reaction 3-deoxy-alpha-D-manno-oct-2-ulosonate + CTP = CMP-3-deoxy-beta-D-manno-octulosonate + diphosphate. It functions in the pathway nucleotide-sugar biosynthesis; CMP-3-deoxy-D-manno-octulosonate biosynthesis; CMP-3-deoxy-D-manno-octulosonate from 3-deoxy-D-manno-octulosonate and CTP: step 1/1. Its pathway is bacterial outer membrane biogenesis; lipopolysaccharide biosynthesis. In terms of biological role, activates KDO (a required 8-carbon sugar) for incorporation into bacterial lipopolysaccharide in Gram-negative bacteria. In Aliivibrio salmonicida (strain LFI1238) (Vibrio salmonicida (strain LFI1238)), this protein is 3-deoxy-manno-octulosonate cytidylyltransferase.